Consider the following 964-residue polypeptide: Cycloisomaltooligosaccharide glucanotransferase (964 aa).

A signal peptide spans 1 to 30 (MRVKILPLVFMTLLLIVPSQMLLPSGQANA). 2 CBM6 domains span residues 413–538 (DRYE…LTLG) and 740–863 (NMYE…LKLD).

This sequence belongs to the glycosyl hydrolase 66 family.

The enzyme catalyses cyclizes part of a (1-&gt;6)-alpha-D-glucan chain by formation of a (1-&gt;6)-alpha-D-glucosidic bond.. Produces cycloisomaltooligosaccharide from dextran. This chain is Cycloisomaltooligosaccharide glucanotransferase (cit), found in Niallia circulans (Bacillus circulans).